Reading from the N-terminus, the 123-residue chain is Histone H2B (123 aa).

The disordered stretch occupies residues 1-30; sequence MPPKTSGKAAKKAGKAQKNITKTDKKKKRK. Proline 2 carries the post-translational modification N-methylproline; partial. Lysine 44 is subject to N6-succinyllysine. An O-linked (GlcNAc) serine glycan is attached at serine 110. 2 positions are modified to N6-succinyllysine: lysine 114 and lysine 118. A Glycyl lysine isopeptide (Lys-Gly) (interchain with G-Cter in ubiquitin) cross-link involves residue lysine 118.

The protein belongs to the histone H2B family. In terms of assembly, the nucleosome is a histone octamer containing two molecules each of H2A, H2B, H3 and H4 assembled in one H3-H4 heterotetramer and two H2A-H2B heterodimers. The octamer wraps approximately 147 bp of DNA. In terms of processing, phosphorylated by the catalytic component of the Dbf4-dependent kinase (DDK) complex Cdc7. Monoubiquitination of Lys-118 by Bre1 gives a specific tag for epigenetic transcriptional activation and is also prerequisite for histone H3 'Lys-4' and 'Lys-79' methylation. Deubiquitination of Lys-118 by the SAGA complex is involved in activating transcription of a large subset of genes. Post-translationally, methylation at Pro-2 increases upon heat shock. In terms of processing, glcNAcylation at Ser-110 promotes monoubiquitination of Lys-118. It fluctuates in response to extracellular glucose, and associates with transcribed genes.

It is found in the nucleus. The protein resides in the chromosome. Its function is as follows. Core component of nucleosome. Nucleosomes wrap and compact DNA into chromatin, limiting DNA accessibility to the cellular machineries which require DNA as a template. Histones thereby play a central role in transcription regulation, DNA repair, DNA replication and chromosomal stability. DNA accessibility is regulated via a complex set of post-translational modifications of histones, also called histone code, and nucleosome remodeling. The protein is Histone H2B (His2B) of Drosophila erecta (Fruit fly).